A 610-amino-acid chain; its full sequence is MSESGQEQNRGTNTSPNNAENNNNSNAASGPLNGGAEQTRNITVSIQYSYFTPERLAHLSNISNNDNNENNSAASGSTIANGTGPSFGIGNGGHQPDGALVLSFRDVPASTPQDRLNSFISVAAQLAMERFNRLLNRPKGISKDEFDKLPVLQVSDLPKAEGPLCSICYDEYEDEVDSTKAKRKRDSENEEESEGTKKRKDNEGAPLRTTADNDSNPSITNATVVEPPSIPLTEQQRTLNDEETNPSYKHSPIKLPCGHIFGRECIYKWSRLENSCPLCRQKISESVGVQRAAQQDTDEVAANEAAFERIRRVLYDPTAVNSTNENSSAPSENTSNTTVPTIGNASSGEQMLSRTGFFLVPQNGQPLHNPVRLPPNDSDRNGVNGPSSTTQNPPSNSGGSNNNQSPRWVPIPLTLFQFHSPNPNPSASDSSASPSAANGPNSNNTSSDATDPHHNRLRAVLDHIFNVAQRGTSDTSATTAPGAQTVHNQGRNDSSSSDTTQGSSFLENISRLTGHFTNGSRDNNNDNNHSNDQQRGGSTGENNRNNLFSSGVASYRNQNGDVTTVELRNNNSAAFPPTDENPSQGQGSSSSDTTIHNDVPNDNNEQRSSQ.

The segment covering 1–10 has biased composition (polar residues); sequence MSESGQEQNR. 2 disordered regions span residues 1–36 and 176–231; these read MSES…NGGA and VDST…PSIP. Low complexity predominate over residues 11-36; sequence GTNTSPNNAENNNNSNAASGPLNGGA. A compositionally biased stretch (basic and acidic residues) spans 194–203; that stretch reads EGTKKRKDNE. The span at 210 to 223 shows a compositional bias: polar residues; that stretch reads TADNDSNPSITNAT. An RING-type zinc finger spans residues 240 to 280; that stretch reads NDEETNPSYKHSPIKLPCGHIFGRECIYKWSRLENSCPLCR. 5 disordered regions span residues 318 to 348, 360 to 453, 471 to 502, 514 to 554, and 569 to 610; these read TAVN…ASSG, VPQN…TDPH, GTSD…TTQG, GHFT…GVAS, and NNNS…RSSQ. The span at 319–348 shows a compositional bias: polar residues; that stretch reads AVNSTNENSSAPSENTSNTTVPTIGNASSG. Low complexity-rich tracts occupy residues 384-406 and 425-447; these read NGPS…NQSP and PSAS…NTSS. Positions 471–492 are enriched in polar residues; that stretch reads GTSDTSATTAPGAQTVHNQGRN. The segment covering 493–502 has biased composition (low complexity); it reads DSSSSDTTQG. 2 stretches are compositionally biased toward polar residues: residues 533-554 and 592-610; these read QQRG…GVAS and DTTI…RSSQ.

Its function is as follows. Plays a specific role in mating-type regulation of yeast, by acting post-translationally to control the stability or activity of the SIR4 proteins. This Saccharomyces cerevisiae (strain ATCC 204508 / S288c) (Baker's yeast) protein is Protein SAN1 (SAN1).